We begin with the raw amino-acid sequence, 939 residues long: MDYRDSLNLPKTNFKMKANLAQREPMILKRWEKEGLYQMLQERAQDRPLFVLHDGPPYANGHIHLGHAFNKILKDIILRSKRASGFNAPYVPGWDCHGLPIEHNVDKELGEEKKKTIPILAKRAACRKYANKWIKTQKPEFKRLGVLGDWEDPYLTINYSYEAAIAREFNKFLLSGSVVRNRKPVYWCSTCTTALAEAEVEYHDHTSPSIYVKFPVIEDFSDVDPALAGDKTFVVIWTTTPWTLPSNTAVAFHPKFQYAAVAVGEETWVLAEDLVEKFMQEVGIEDYSIKSTFTAEKLENRNCRHPFMDRDSRLVFADYVTTEAGTGCVHTAPGHGADDYATGLRYGLEVLSPVDGDGIYTKEAGPYAGRQVPEVNSDIIADLAESGLLVFKKDINHSYPHCWRCRKPVMYRATPQWFISMENNDLRKKALKNIESVSWTPSWGMNRIHSMVESRPDWCLSRQRTWGVPLTVISCKDCGEVVKSEEVVAKIDELFLKEGADAWFSHPVEDFLPEGHVCTCGCATFIKEEDILDVWFDSGSSFAAVCELRDDLVAPADLYLEGSDQHRGWFQSSLITATGTRGYAPFKGVLTHGYVVDGQGKKMSKSVGNVVAPQEVIDEYGAEILRLWVSSEDYRDDVKVSKEILKQVSDSYRKIRNTIRYFLGNLNDFDPSKDRIAVSEMSELDRWALARFEELRAKITESYDKYEFHAINQSLNYFCGTTMSAFYLDIIKDRLYVEGTDSTIRRASQTVLYDILDGLLRLMSPVLSFTAADAWNALYSLGEKDSLEKSVFFADFPVAIDPQFDAEQEARWQRLIKIRSELTKALELARRDKVIGHSLEAEVLVKGEGELGEFIHAEWQHLREISIVSAMSEIEGAPEESAYVSEEVEGLVVSVKLAPGVKCDRCWIRSTTVGDSVEHPQLCSRCLAIVEDMDLEMDA.

The short motif at 57 to 67 is the 'HIGH' region element; it reads PYANGHIHLGH. E561 lines the L-isoleucyl-5'-AMP pocket. The 'KMSKS' region signature appears at 602–606; sequence KMSKS. K605 serves as a coordination point for ATP. C903, C906, C923, and C926 together coordinate Zn(2+).

It belongs to the class-I aminoacyl-tRNA synthetase family. IleS type 1 subfamily. Monomer. Requires Zn(2+) as cofactor.

Its subcellular location is the cytoplasm. It catalyses the reaction tRNA(Ile) + L-isoleucine + ATP = L-isoleucyl-tRNA(Ile) + AMP + diphosphate. In terms of biological role, catalyzes the attachment of isoleucine to tRNA(Ile). As IleRS can inadvertently accommodate and process structurally similar amino acids such as valine, to avoid such errors it has two additional distinct tRNA(Ile)-dependent editing activities. One activity is designated as 'pretransfer' editing and involves the hydrolysis of activated Val-AMP. The other activity is designated 'posttransfer' editing and involves deacylation of mischarged Val-tRNA(Ile). The polypeptide is Isoleucine--tRNA ligase (Desulfotalea psychrophila (strain LSv54 / DSM 12343)).